A 341-amino-acid polypeptide reads, in one-letter code: Muscleblind-like protein 1 (341 aa).

Thr-6 bears the Phosphothreonine mark. 4 consecutive C3H1-type zinc fingers follow at residues 13 to 41, 47 to 73, 178 to 206, and 214 to 240; these read WLTLEVCREFQRGTCSRPDTECKFAHPSK, NGRVIACFDSLKGRCSRENCKYLHPPP, TDRLEVCREYQRGNCNRGENDCRFAHPAD, and DNTVTVCMDYIKGRCSREKCKYFHPPA.

The protein belongs to the muscleblind family. As to quaternary structure, interacts with DDX1 and YBX1. Interacts with HNRNPH1; the interaction in RNA-independent. Interacts with RBPMS; the interaction allows cooperative assembly of RNA-bound stable cell-specific alternative splicing regulatory complexes. Highly expressed in cardiac and skeletal muscle. Weakly expressed in heart and eye (at protein level).

The protein resides in the nucleus. It localises to the cytoplasm. The protein localises to the cytoplasmic granule. Its function is as follows. Mediates pre-mRNA alternative splicing regulation. Acts either as activator or repressor of splicing on specific pre-mRNA targets. Inhibits cardiac troponin-T (TNNT2) pre-mRNA exon inclusion but induces insulin receptor (IR) pre-mRNA exon inclusion in muscle. Antagonizes the alternative splicing activity pattern of CELF proteins. Regulates the TNNT2 exon 5 skipping through competition with U2AF2. Inhibits the formation of the spliceosome A complex on intron 4 of TNNT2 pre-mRNA. Binds to the stem-loop structure within the polypyrimidine tract of TNNT2 intron 4 during spliceosome assembly. Binds to the 5'-YGCU(U/G)Y-3'consensus sequence. Binds to the IR RNA. Binds to CUG triplet repeat expansion in myotonic dystrophy muscle cells by sequestering the target RNAs. Together with RNA binding proteins RBPMS and RBFOX2, activates vascular smooth muscle cells alternative splicing events. Regulates NCOR2 alternative splicing. This is Muscleblind-like protein 1 (Mbnl1) from Mus musculus (Mouse).